The sequence spans 350 residues: LIM domain-containing protein unc-95 (350 aa).

Positions 1-37 (MTISPQPSHQQFESYQWTTESRSSQQRHGTGTPSQDG) are enriched in polar residues. The disordered stretch occupies residues 1–65 (MTISPQPSHQ…ESRNSNKDKV (65 aa)). Over residues 45–65 (PVERHVARWRSESRNSNKDKV) the composition is skewed to basic and acidic residues. Residues 83–110 (LTALKNDVEQTTEIIRRKQEQMRMERRQ) are a coiled coil. Disordered regions lie at residues 177-198 (RRGQ…EIEY), 206-225 (PEEQ…METD), and 235-262 (MSEE…SGSP). One can recognise an LIM zinc-binding domain in the interval 268–334 (AVCAYCSEEI…HDCFYKLYNG (67 aa)).

Ubiquitinated. Ubiquitination by rnf-5 leads to dissociation from muscle dense bodies during molting and is required for ecdysis. In terms of tissue distribution, expressed in the body wall muscles, vulval muscles and the anal muscles. Expressed in the muscle arms of the head muscle cells that form neuromuscular junctions and in the anal depressor muscle.

The protein resides in the cytoplasm. It is found in the nucleus. Its subcellular location is the cell membrane. It localises to the myofibril. The protein localises to the sarcomere. The protein resides in the m line. It is found in the cell junction. Its subcellular location is the focal adhesion. Functionally, required for the assembly and integrity of muscle dense bodies, which establish the adhesion sites of the muscle cells to the extracellular matrix. Decreased localization of unc-95 to dense bodies and their subsequent dissociation plays an important role in ecdysis during molting. Involved in the organization of the muscle sarcomeric structure and thereby required for locomotion. This is LIM domain-containing protein unc-95 from Caenorhabditis elegans.